Here is a 110-residue protein sequence, read N- to C-terminus: U32-theraphotoxin-Cg1a (110 aa).

The first 19 residues, 1–19 (MKHCFLILFTLIVFTVVWS), serve as a signal peptide directing secretion. A propeptide spanning residues 20 to 43 (LEENEEYPDEDEMIESFMDGYSYR) is cleaved from the precursor. 4 disulfide bridges follow: C49/C63, C56/C69, C60/C105, and C62/C80.

This sequence belongs to the neurotoxin 03 (Tx2) family. 02 subfamily. As to expression, expressed by the venom gland.

The protein localises to the secreted. Functionally, probable ion channel inhibitor. This chain is U32-theraphotoxin-Cg1a, found in Chilobrachys guangxiensis (Chinese earth tiger tarantula).